The following is a 502-amino-acid chain: Ubiquilin (502 aa).

The Ubiquitin-like domain maps to 8–83 (IKVHVKSPSN…VHLVIRNQAR (76 aa)). Residues 84 to 115 (PTPAPAAATPTASSAPSSNPTPSSQPNPTNNP) are compositionally biased toward low complexity. The tract at residues 84–136 (PTPAPAAATPTASSAPSSNPTPSSQPNPTNNPFAAMGGMGSPADILNNPDAMR) is disordered. STI1 domains lie at 124-157 (SPAD…MRTI) and 161-200 (NPQF…FQEM). The span at 235 to 251 (SATNSLSGNPFASLRGD) shows a compositional bias: polar residues. A disordered region spans residues 235-294 (SATNSLSGNPFASLRGDQSSEPRVDRAGQENNEALPNPWASNANQATNNQSNNRSADFNS). The span at 252–262 (QSSEPRVDRAG) shows a compositional bias: basic and acidic residues. Residues 274–290 (ASNANQATNNQSNNRSA) show a composition bias toward low complexity. 2 consecutive STI1 domains span residues 289–327 (SADF…INSI) and 351–387 (NPQI…SEAF). The region spanning 455-501 (PVNPEQTYASQLEQLQSMGFSDRARNVAALTATFGDLNAAVERLLNS) is the UBA domain.

As to expression, expressed in the pharynx, hypodermis, intestine and head neurons. Upon ER stress, expressed predominantly in pharyngeal muscle, hypodermis and intestine.

Functionally, may play a role in the ER-associated protein degradation pathway (ERAD) possibly via its interaction with ER-localized proteins ubxn-4 and cdc-48.1 and/or cdc48.2, providing a link between the polyubiquitinated ERAD substrates and the proteasome. Also plays an important role in the regulation of other protein degradation mechanisms and pathways including ubiquitin-proteasome system (UPS) and autophagy. Mediates the proteasomal targeting of misfolded or accumulated proteins for degradation by binding (via UBA domain) to their polyubiquitin chains and by interacting (via ubiquitin-like domain) with the subunits of the proteasome. Collaborates with POST (F36D4.5) in the export of ubiquitinated proteins from the nucleus to the cytoplasm. Also acts as a regulator of DNA repair by inhibiting homologous recombination repair, thereby redirecting double-strand break repair toward non-homologous end joining (NHEJ). This is Ubiquilin from Caenorhabditis elegans.